The sequence spans 150 residues: Keratin-associated protein 15-1 (150 aa).

The protein belongs to the PMG family. Interacts with hair keratins. As to expression, expressed at high levels in skin and at lower levels in the developing mammary gland.

Its function is as follows. In the hair cortex, hair keratin intermediate filaments are embedded in an interfilamentous matrix, consisting of hair keratin-associated proteins (KRTAP), which are essential for the formation of a rigid and resistant hair shaft through their extensive disulfide bond cross-linking with abundant cysteine residues of hair keratins. The matrix proteins include the high-sulfur and high-glycine-tyrosine keratins. The sequence is that of Keratin-associated protein 15-1 from Mus musculus (Mouse).